The chain runs to 311 residues: uncharacterized protein (311 aa).

The next 10 helical transmembrane spans lie at 13-33, 41-61, 76-96, 103-123, 128-148, 157-177, 192-212, 218-238, 248-268, and 272-292; these read STAVIKMVISMVIFGSIGFFS, FELVFVRCLCATLFLGFCWLA, LQTLACGFFLVFNWVFLFKSF, IAISVYHLAPVLVLLLGSFFY, NVISVSSIIICFLGTALISGI, LMGSGIIWAVLAALFYAFTTL, FLQTGLGVIILIPFIHFGAFA, NWIMVVSTGIIHTGIVYLLFF, FISIIVFLDPAVAIVLDTVFT, and PDLYQTLGIVMIFAGMALTLV. EamA domains are found at residues 24–147 and 166–292; these read VIFG…LISG and VLAA…LTLV.

This sequence belongs to the EamA transporter family.

The protein localises to the cell membrane. This is an uncharacterized protein from Bacillus subtilis (strain 168).